Here is a 483-residue protein sequence, read N- to C-terminus: Regulatory protein ViaA (483 aa).

It belongs to the ViaA family. In terms of assembly, homodimer. Interacts with RavA.

Its subcellular location is the cytoplasm. Its function is as follows. Component of the RavA-ViaA chaperone complex, which may act on the membrane to optimize the function of some of the respiratory chains. ViaA stimulates the ATPase activity of RavA. The chain is Regulatory protein ViaA from Escherichia coli O7:K1 (strain IAI39 / ExPEC).